A 251-amino-acid chain; its full sequence is Cytochrome P450 monooxygenase ppzG (251 aa).

Cys250 contributes to the heme binding site.

This sequence belongs to the cytochrome P450 family. Heme is required as a cofactor.

Its pathway is secondary metabolite biosynthesis. Functionally, cytochrome P450 monooxygenase; part of the gene cluster that mediates the biosynthesis of pyrrolopyrazines, secondary metabolites showing insecticidal activity. The role of ppzG within the pathway has still to be determined. The single multifunctional NRPS ppzA is sufficient to produce peramine via condensation of 1-pyrroline-5-carboxylate and arginine, N-methylation of the alpha-amino group of arginine and reduction of the thioester and the cyclization to form an iminium ion resulting in release from the peptide synthetase. Deprotonation of this intermediate and oxidation of the pyrroline ring would give rise to peramine. In Epichloe species that produce only peramine, the peramine synthetase gene is not localized in a gene cluster, in contrast to Metarhizium species that contain additional pyrrolopyrazine biosynthesis genes. The 2-oxoglutarate-Fe(II) type oxidoreductase ppzC hydroxylates peramine to yield the newly identified compound 8-hydroxyperamine whereas ppzD converts L-proline into trans-4-hydroxy-L-proline, a precursor of peramine biosynthesis. The chain is Cytochrome P450 monooxygenase ppzG from Metarhizium rileyi (strain RCEF 4871) (Nomuraea rileyi).